A 94-amino-acid chain; its full sequence is Integration host factor subunit beta (94 aa).

The protein belongs to the bacterial histone-like protein family. Heterodimer of an alpha and a beta chain.

In terms of biological role, this protein is one of the two subunits of integration host factor, a specific DNA-binding protein that functions in genetic recombination as well as in transcriptional and translational control. The chain is Integration host factor subunit beta from Serratia proteamaculans (strain 568).